The primary structure comprises 79 residues: MHMPSGTQWLIILLIVVLLFGAKKIPELAKGLGKGIKTFKDEMNTEDDKKITQEDAQKIEKINEKDILAKENNEEVKKA.

A helical membrane pass occupies residues 1 to 21 (MHMPSGTQWLIILLIVVLLFG).

It belongs to the TatA/E family. In terms of assembly, the Tat system comprises two distinct complexes: a TatABC complex, containing multiple copies of TatA, TatB and TatC subunits, and a separate TatA complex, containing only TatA subunits. Substrates initially bind to the TatABC complex, which probably triggers association of the separate TatA complex to form the active translocon.

It localises to the cell inner membrane. Part of the twin-arginine translocation (Tat) system that transports large folded proteins containing a characteristic twin-arginine motif in their signal peptide across membranes. TatA could form the protein-conducting channel of the Tat system. The chain is Sec-independent protein translocase protein TatA from Campylobacter lari (strain RM2100 / D67 / ATCC BAA-1060).